The chain runs to 198 residues: MICOS complex subunit Mic26 (198 aa).

Residues Met-1–Ala-23 form the signal peptide. N-linked (GlcNAc...) asparagine glycosylation is present at Asn-63. The helical transmembrane segment at Pro-108–Ala-128 threads the bilayer.

The protein belongs to the apolipoprotein O/MICOS complex subunit Mic27 family. Component of the mitochondrial contact site and cristae organizing system (MICOS) complex, composed of at least MICOS10/MIC10, CHCHD3/MIC19, CHCHD6/MIC25, APOOL/MIC27, IMMT/MIC60, APOO/MIC23/MIC26 and MICOS13/MIC13. This complex was also known under the names MINOS or MitOS complex. The MICOS complex associates with mitochondrial outer membrane proteins SAMM50, MTX1 and MTX2 (together described as components of the mitochondrial outer membrane sorting assembly machinery (SAM) complex) and DNAJC11, mitochondrial inner membrane protein TMEM11 and with HSPA9. The MICOS and SAM complexes together with DNAJC11 are part of a large protein complex spanning both membranes termed the mitochondrial intermembrane space bridging (MIB) complex. Interacts with IMMT/MIC60. Interacts with MICOS10/MIC10 and APOOL/MIC27.

It localises to the mitochondrion inner membrane. The protein localises to the mitochondrion. It is found in the endoplasmic reticulum membrane. The protein resides in the golgi apparatus membrane. Its function is as follows. Component of the MICOS complex, a large protein complex of the mitochondrial inner membrane that plays crucial roles in the maintenance of crista junctions, inner membrane architecture, and formation of contact sites to the outer membrane. Plays a crucial role in crista junction formation and mitochondrial function. Can induce cardiac lipotoxicity by enhancing mitochondrial respiration and fatty acid metabolism in cardiac myoblasts. Promotes cholesterol efflux from macrophage cells. Detected in HDL, LDL and VLDL. Secreted by a microsomal triglyceride transfer protein (MTTP)-dependent mechanism, probably as a VLDL-associated protein that is subsequently transferred to HDL. The protein is MICOS complex subunit Mic26 (Apoo) of Mus musculus (Mouse).